The following is a 491-amino-acid chain: Cyclin-A1-3 (491 aa).

The span at 1-21 (MSSSLASRRSSSSSAAKRPAA) shows a compositional bias: low complexity. Disordered regions lie at residues 1–32 (MSSS…AAGA) and 69–106 (SLAS…QKES). Positions 75–91 (NVGTNRVSAVKSASTKP) are enriched in polar residues.

It belongs to the cyclin family. Cyclin AB subfamily.

In Oryza sativa subsp. japonica (Rice), this protein is Cyclin-A1-3 (CYCA1-3).